A 745-amino-acid polypeptide reads, in one-letter code: 5-methyltetrahydropteroyltriglutamate--homocysteine methyltransferase (745 aa).

Residues 16 to 19 (REWK) and Lys-110 each bind 5-methyltetrahydropteroyltri-L-glutamate. Residues 420–422 (IGS) and Glu-473 contribute to the L-homocysteine site. L-methionine is bound by residues 420 to 422 (IGS) and Glu-473. Trp-550 contributes to the 5-methyltetrahydropteroyltri-L-glutamate binding site. Asp-588 is an L-homocysteine binding site. Asp-588 lines the L-methionine pocket. A 5-methyltetrahydropteroyltri-L-glutamate-binding site is contributed by Glu-594. 3 residues coordinate Zn(2+): His-630, Cys-632, and Glu-654. His-683 functions as the Proton donor in the catalytic mechanism. Zn(2+) is bound at residue Cys-715.

It belongs to the vitamin-B12 independent methionine synthase family. Requires Zn(2+) as cofactor.

The catalysed reaction is 5-methyltetrahydropteroyltri-L-glutamate + L-homocysteine = tetrahydropteroyltri-L-glutamate + L-methionine. The protein operates within amino-acid biosynthesis; L-methionine biosynthesis via de novo pathway; L-methionine from L-homocysteine (MetE route): step 1/1. In terms of biological role, catalyzes the transfer of a methyl group from 5-methyltetrahydrofolate to homocysteine resulting in methionine formation. This is 5-methyltetrahydropteroyltriglutamate--homocysteine methyltransferase from Streptococcus agalactiae serotype III (strain NEM316).